Here is a 222-residue protein sequence, read N- to C-terminus: Interleukin-12 subunit alpha (222 aa).

Positions Met1 to Ala25 are cleaved as a signal peptide. 3 disulfides stabilise this stretch: Cys40-Cys113, Cys67-Cys199, and Cys88-Cys126. Residues Asn42, Asn96, Asn110, and Asn183 are each glycosylated (N-linked (GlcNAc...) asparagine).

Belongs to the IL-6 superfamily. As to quaternary structure, heterodimer with IL12B; disulfide-linked. This heterodimer is known as interleukin IL-12. Heterodimer with EBI3/IL27B; not disulfide-linked. This heterodimer is known as interleukin IL-35. Interacts with NBR1; this interaction promotes IL-12 secretion.

The protein resides in the secreted. Heterodimerizes with IL12B to form the IL-12 cytokine or with EBI3/IL27B to form the IL-35 cytokine. IL-12 is primarily produced by professional antigen-presenting cells (APCs) such as B-cells and dendritic cells (DCs) as well as macrophages and granulocytes and regulates T-cell and natural killer-cell responses, induces the production of interferon-gamma (IFN-gamma), favors the differentiation of T-helper 1 (Th1) cells and is an important link between innate resistance and adaptive immunity. Mechanistically, exerts its biological effects through a receptor composed of IL12R1 and IL12R2 subunits. Binding to the receptor results in the rapid tyrosine phosphorylation of a number of cellular substrates including the JAK family kinases TYK2 and JAK2. In turn, recruited STAT4 gets phosphorylated and translocates to the nucleus where it regulates cytokine/growth factor responsive genes. As part of IL-35, plays essential roles in maintaining the immune homeostasis of the liver microenvironment and also functions as an immune-suppressive cytokine. Mediates biological events through unconventional receptors composed of IL12RB2 and gp130/IL6ST heterodimers or homodimers. Signaling requires the transcription factors STAT1 and STAT4, which form a unique heterodimer that binds to distinct DNA sites. In Felis catus (Cat), this protein is Interleukin-12 subunit alpha (IL12A).